Consider the following 122-residue polypeptide: Small ribosomal subunit protein uS13 (122 aa).

Residues 95–122 (GLPVRGQRTHTNARTRKGKAKPIAGKKK) are disordered.

Belongs to the universal ribosomal protein uS13 family. Part of the 30S ribosomal subunit. Forms a loose heterodimer with protein S19. Forms two bridges to the 50S subunit in the 70S ribosome.

Located at the top of the head of the 30S subunit, it contacts several helices of the 16S rRNA. In the 70S ribosome it contacts the 23S rRNA (bridge B1a) and protein L5 of the 50S subunit (bridge B1b), connecting the 2 subunits; these bridges are implicated in subunit movement. Contacts the tRNAs in the A and P-sites. The chain is Small ribosomal subunit protein uS13 from Zymomonas mobilis subsp. mobilis (strain ATCC 31821 / ZM4 / CP4).